A 546-amino-acid polypeptide reads, in one-letter code: MQLPAMSCSPSQSSAAAAAAAYGCCQRILLASTSLPATGRPARLGLKLRSTHSLQIRNRRFVCQAMTETEPDGDGNGDEEKEELGDDASSPSVDSVTQENGSAESETNADNTKDETVNTEPLSSSDTVQNIDGDATPASDAQENVEVVDVAVGSPLPGMKQQLDESVRIPKATIDILKDQVFGFDTFFVTSQEPYEGGILFKGNLRGQPAKSYEKITNRLQNKFGDQYKLFLLINPEDDKPVAVVVPRQTLQPETTAVPEWFAAASFGVVTIFTLLLRNVPLLQDNLLSTFDNLELLKDGVYGALVTAAIIGVHEIAHILAARDTGIKLAVPYFVPSWQIGSFGAITRIVNIVRNREDLLKVAAAGPLAGFSLGFVLLLLGFILPPSDGLGLVIDPAVFHESFLVGGLAKLILGDALKEGTKLSINPLVLWAWAGLLINAINSIPAGELDGGRIAFAMWGRKISSRISSLAIGLLGISALFNDVAFYWVVLIFFLQRGPISPLSEEITEPENNYISIGVAILLFGLLVCLPYPFPFDPSQLTDFDL.

The transit peptide at 1–64 (MQLPAMSCSP…QIRNRRFVCQ (64 aa)) directs the protein to the chloroplast. Residues 67 to 143 (TETEPDGDGN…DATPASDAQE (77 aa)) are disordered. The span at 69–86 (TEPDGDGNGDEEKEELGD) shows a compositional bias: acidic residues. Polar residues-rich tracts occupy residues 89-110 (SSPS…TNAD) and 118-130 (NTEP…TVQN). A run of 7 helical transmembrane segments spans residues 257–277 (AVPE…TLLL), 301–321 (VYGA…HILA), 326–346 (GIKL…FGAI), 364–384 (AAGP…GFIL), 427–447 (PLVL…IPAG), 474–494 (LLGI…LIFF), and 514–534 (YISI…PYPF).

It belongs to the peptidase M50B family.

It localises to the plastid. Its subcellular location is the chloroplast membrane. Its function is as follows. Probable membrane-associated metalloprotease that may be involved in chloroplast development. This Oryza sativa subsp. japonica (Rice) protein is Probable zinc metalloprotease EGY2, chloroplastic (EGY2).